A 559-amino-acid chain; its full sequence is Phosphatase and actin regulator 3 (559 aa).

The tract at residues 1–65 (MAASEDGSGC…GIRTPPVRRN (65 aa)) is disordered. Residues 15-24 (GRSQSDPSVL) are compositionally biased toward polar residues. A compositionally biased stretch (low complexity) spans 25–35 (TDSSATSSADA). Threonine 70 is modified (phosphothreonine). The disordered stretch occupies residues 82–342 (KKKNEKLKQT…VERGKEREEA (261 aa)). Residues 93 to 118 (SALEKKMAGRQGREELIKKGLLEMME) form an RPEL 1 repeat. Over residues 95-113 (LEKKMAGRQGREELIKKGL) the composition is skewed to basic and acidic residues. Residues 134-151 (SVQSEPPTPKSETLTSED) are compositionally biased toward polar residues. Over residues 229–240 (PSPPLLPTPPPK) the composition is skewed to pro residues. Serine 230 bears the Phosphoserine mark. A Phosphothreonine modification is found at threonine 236. 2 stretches are compositionally biased toward polar residues: residues 248–262 (NVTG…SSMK) and 270–281 (GQLSTPTGSPHL). The segment covering 293-342 (VIEELHRALATKHRQDSFQGRESKGSPKKRLDVRLSRTSSVERGKEREEA) has biased composition (basic and acidic residues). The stretch at 346 to 369 (DGALENKRTAAKESEENKENLIIN) forms a coiled coil. 3 RPEL repeats span residues 401-426 (ELLA…PRRT), 439-464 (MKLS…KQRN), and 477-502 (QRLT…IRFS). The required for PP1CA binding and inhibition of PP1 activity stretch occupies residues 438 to 518 (EMKLSKRLSQ…KAQDYDRRAD (81 aa)). The stretch at 450-486 (AVEELERRNILKQRNDQTEQEERREIKQRLTRKLNQR) forms a coiled coil.

It belongs to the phosphatase and actin regulator family. Binds actin and PPP1CA; thus inhibiting the protein phosphatase 1 (PP1) activity. Abundantly expressed in brain. Also found in several tumors such as lung carcinomas, nervous tumors and HL-60 leukemia cells. Isoform 3 is the major form in U-937, GOTO and HL-60 leukemia cells.

It localises to the nucleus matrix. This chain is Phosphatase and actin regulator 3 (PHACTR3), found in Homo sapiens (Human).